We begin with the raw amino-acid sequence, 29 residues long: Glucagon (29 aa).

This sequence belongs to the glucagon family.

Its subcellular location is the secreted. Its function is as follows. Promotes hydrolysis of glycogen and lipids, and raises the blood sugar level. The polypeptide is Glucagon (gcg) (Torpedo marmorata (Marbled electric ray)).